Consider the following 574-residue polypeptide: Acetolactate synthase isozyme 3 large subunit (574 aa).

Glu51 serves as a coordination point for thiamine diphosphate. Residues Arg153, 261–282, and 304–323 each bind FAD; these read HGTYEANMTMHNADVIFAVGVR and DIDPTSISKTVTADIPIVGD. Positions 397–477 are thiamine pyrophosphate binding; the sequence is QHQMFAALYY…VLVVNLNNRY (81 aa). Residues Asp448 and Asn475 each coordinate Mg(2+).

It belongs to the TPP enzyme family. Dimer of large and small chains. Mg(2+) is required as a cofactor. Requires thiamine diphosphate as cofactor.

The catalysed reaction is 2 pyruvate + H(+) = (2S)-2-acetolactate + CO2. It participates in amino-acid biosynthesis; L-isoleucine biosynthesis; L-isoleucine from 2-oxobutanoate: step 1/4. Its pathway is amino-acid biosynthesis; L-valine biosynthesis; L-valine from pyruvate: step 1/4. Its activity is regulated as follows. Sensitive to valine inhibition. This chain is Acetolactate synthase isozyme 3 large subunit (ilvI), found in Escherichia coli (strain K12).